The following is a 311-amino-acid chain: Malate dehydrogenase (311 aa).

NAD(+) is bound by residues 7 to 13 and aspartate 34; that span reads GAAGGIG. Substrate contacts are provided by arginine 81 and arginine 87. Residues asparagine 94 and 117–119 contribute to the NAD(+) site; that span reads ITN. The substrate site is built by asparagine 119 and arginine 153. Histidine 177 (proton acceptor) is an active-site residue. Methionine 227 serves as a coordination point for NAD(+).

The protein belongs to the LDH/MDH superfamily. MDH type 1 family. As to quaternary structure, homodimer.

The catalysed reaction is (S)-malate + NAD(+) = oxaloacetate + NADH + H(+). Catalyzes the reversible oxidation of malate to oxaloacetate. The chain is Malate dehydrogenase from Shewanella woodyi (strain ATCC 51908 / MS32).